A 237-amino-acid chain; its full sequence is Peptidase E (237 aa).

Active-site charge relay system residues include serine 122, aspartate 137, and histidine 159.

It belongs to the peptidase S51 family.

It localises to the cytoplasm. It carries out the reaction Dipeptidase E catalyzes the hydrolysis of dipeptides Asp-|-Xaa. It does not act on peptides with N-terminal Glu, Asn or Gln, nor does it cleave isoaspartyl peptides.. Hydrolyzes dipeptides containing N-terminal aspartate residues. May play a role in allowing the cell to use peptide aspartate to spare carbon otherwise required for the synthesis of the aspartate family of amino acids. This is Peptidase E from Shewanella baltica (strain OS185).